Consider the following 128-residue polypeptide: Anti-sigma-F factor antagonist RsfA (128 aa).

The region spanning 17–128 (LKATIQHHDS…PTTESALSAT (112 aa)) is the STAS domain. C73 and C109 are joined by a disulfide.

Belongs to the anti-sigma-factor antagonist family. Monomer. Interacts with anti-sigma-F factor RsbW (UsfX).

In terms of biological role, positive, redox-sensitive regulator of sigma-F (SigF) activity. When reduced binds to anti-sigma-F factor RsbW (UsfX) preventing its binding to SigF, thus activating transcription. This is Anti-sigma-F factor antagonist RsfA (rsfA) from Mycobacterium tuberculosis (strain CDC 1551 / Oshkosh).